Reading from the N-terminus, the 331-residue chain is RNA/RNP complex-1-interacting phosphatase (331 aa).

The 148-residue stretch at 61–208 folds into the Tyrosine-protein phosphatase domain; sequence FEKHLAPEEC…LRNGPIRKNW (148 aa). The active-site Phosphocysteine intermediate is C152. 153–158 serves as a coordination point for substrate; sequence THGVNR. The Proton donor/acceptor role is filled by R158.

It belongs to the protein-tyrosine phosphatase family. Non-receptor class dual specificity subfamily. As to quaternary structure, monomer. May interact with SFRS7 and SFRS9/SRP30C.

It is found in the nucleus. The protein localises to the nucleus speckle. Possesses RNA 5'-triphosphatase and diphosphatase activities, but displays a poor protein-tyrosine phosphatase activity. In addition, has phosphatase activity with ATP, ADP and O-methylfluorescein phosphate (in vitro). Binds to RNA. May participate in nuclear mRNA metabolism. This is RNA/RNP complex-1-interacting phosphatase (DUSP11) from Bos taurus (Bovine).